Reading from the N-terminus, the 151-residue chain is Deoxyuridine 5'-triphosphate nucleotidohydrolase (151 aa).

Substrate-binding positions include 70–72, N83, 87–89, and M97; these read RSG and LID.

It belongs to the dUTPase family. The cofactor is Mg(2+).

It carries out the reaction dUTP + H2O = dUMP + diphosphate + H(+). The protein operates within pyrimidine metabolism; dUMP biosynthesis; dUMP from dCTP (dUTP route): step 2/2. This enzyme is involved in nucleotide metabolism: it produces dUMP, the immediate precursor of thymidine nucleotides and it decreases the intracellular concentration of dUTP so that uracil cannot be incorporated into DNA. This chain is Deoxyuridine 5'-triphosphate nucleotidohydrolase, found in Pseudomonas paraeruginosa (strain DSM 24068 / PA7) (Pseudomonas aeruginosa (strain PA7)).